The chain runs to 152 residues: Ubiquitin-conjugating enzyme E2 2 (152 aa).

The UBC core domain occupies 4 to 150 (PARKRLMRDF…VREVVEQSWT (147 aa)). The active-site Glycyl thioester intermediate is Cys88.

Belongs to the ubiquitin-conjugating enzyme family. In terms of tissue distribution, expressed in all tissues examined. Lower levels found in leaves.

The enzyme catalyses S-ubiquitinyl-[E1 ubiquitin-activating enzyme]-L-cysteine + [E2 ubiquitin-conjugating enzyme]-L-cysteine = [E1 ubiquitin-activating enzyme]-L-cysteine + S-ubiquitinyl-[E2 ubiquitin-conjugating enzyme]-L-cysteine.. The protein operates within protein modification; protein ubiquitination. Its function is as follows. Accepts the ubiquitin from the E1 complex and catalyzes its covalent attachment to other proteins. This Arabidopsis thaliana (Mouse-ear cress) protein is Ubiquitin-conjugating enzyme E2 2 (UBC2).